The primary structure comprises 444 residues: Structure-specific endonuclease subunit SLX1 (444 aa).

Positions 23-105 constitute a GIY-YIG domain; the sequence is AFYCCYLLRS…QNTKVSRHAD (83 aa). An SLX1-type zinc finger spans residues 240-295; sequence CGVCKQRLILQHDIIAVCSHSSCHCAAHLSCLSSHFLKDKDSDSELIPREGTCPAC. 2 disordered regions span residues 323–355 and 386–444; these read RRRRQAGTPKGQGLKSVRGRGRGHSEDESDALQ and AHRP…EVIE.

Belongs to the SLX1 family. As to quaternary structure, forms a heterodimer with SLX4. A divalent metal cation serves as cofactor.

The protein resides in the nucleus. Functionally, catalytic subunit of the SLX1-SLX4 structure-specific endonuclease that resolves DNA secondary structures generated during DNA repair and recombination. Has endonuclease activity towards branched DNA substrates, introducing single-strand cuts in duplex DNA close to junctions with ss-DNA. The protein is Structure-specific endonuclease subunit SLX1 of Paracoccidioides brasiliensis (strain Pb18).